We begin with the raw amino-acid sequence, 294 residues long: Undecaprenyl-diphosphatase (294 aa).

A run of 9 helical transmembrane segments spans residues 2-22 (SMIYITLNIIAYVIDVRSLIL), 27-47 (LVFSLILGIVEGLTEFLPISS), 65-85 (VIAFTVIIQLGAILSITKIFW), 110-130 (LCIRHIFLGTFPGIMLGMIFY), 135-155 (LIFELTYIMYGLIIGGIFLLV), 172-192 (ITYLQAFLIGCFQCLAFWPGF), 215-235 (FSFFLAVPIIFGSAVLTLYHY), 239-259 (IGLMDVLLLIAGSATAFFIAL), and 272-292 (VSLIPFAIYRFLLAGGIYWGL).

It belongs to the UppP family.

The protein localises to the cell inner membrane. The catalysed reaction is di-trans,octa-cis-undecaprenyl diphosphate + H2O = di-trans,octa-cis-undecaprenyl phosphate + phosphate + H(+). Functionally, catalyzes the dephosphorylation of undecaprenyl diphosphate (UPP). Confers resistance to bacitracin. The protein is Undecaprenyl-diphosphatase of Blochmanniella pennsylvanica (strain BPEN).